Here is a 273-residue protein sequence, read N- to C-terminus: Large ribosomal subunit protein uL2 (273 aa).

The tract at residues valine 228–lysine 273 is disordered. Positions lysine 254 to lysine 273 are enriched in basic residues.

This sequence belongs to the universal ribosomal protein uL2 family. Part of the 50S ribosomal subunit. Forms a bridge to the 30S subunit in the 70S ribosome.

Its function is as follows. One of the primary rRNA binding proteins. Required for association of the 30S and 50S subunits to form the 70S ribosome, for tRNA binding and peptide bond formation. It has been suggested to have peptidyltransferase activity; this is somewhat controversial. Makes several contacts with the 16S rRNA in the 70S ribosome. In Rickettsia bellii (strain OSU 85-389), this protein is Large ribosomal subunit protein uL2.